The chain runs to 988 residues: Squamosa promoter-binding-like protein 16 (988 aa).

The interval 52–79 (GTPVDLTRPSKKVRSGSPGSGGGGGGNY) is disordered. The segment covering 69–78 (PGSGGGGGGN) has biased composition (gly residues). The SBP-type zinc-finger motif lies at 79–156 (YPKCQVDNCK…DGHNRRRRKT (78 aa)). The Zn(2+) site is built by Cys82, Cys87, Cys104, His107, Cys123, Cys126, His130, and Cys142. A Bipartite nuclear localization signal motif is present at residues 139 to 155 (KRSCRRRLDGHNRRRRK). Disordered regions lie at residues 240–262 (RKNP…SSPS) and 289–416 (GFGN…DTST). 3 stretches are compositionally biased toward polar residues: residues 250-262 (NPQN…SSPS), 301-311 (LTSSDHSATTS), and 327-358 (RTSS…FTSS). Over residues 368–379 (ASSTKYYSSASS) the composition is skewed to low complexity.

Requires Zn(2+) as cofactor.

Its subcellular location is the nucleus. Its function is as follows. Trans-acting factor that binds specifically to the consensus nucleotide sequence 5'-TNCGTACAA-3'. The sequence is that of Squamosa promoter-binding-like protein 16 (SPL16) from Arabidopsis thaliana (Mouse-ear cress).